The primary structure comprises 219 residues: Ras-related protein Rab-3D (219 aa).

N-acetylalanine is present on Ala-2. 29-37 lines the GDP pocket; it reads GNSSVGKTS. 9 residues coordinate GTP: Ser-31, Ser-32, Val-33, Gly-34, Lys-35, Thr-36, Ser-37, Pro-49, and Ser-53. Thr-36 contributes to the Mg(2+) binding site. A Switch 1 motif is present at residues 49 to 58; the sequence is PAFVSTVGID. Positions 54 and 77 each coordinate Mg(2+). Gly-80 lines the GTP pocket. Residues 80-96 carry the Switch 2 motif; that stretch reads GQERYRTITTAYYRGAM. The residue at position 86 (Thr-86) is a Phosphothreonine; by LRRK2. Residues Asn-135, Lys-136, Asp-138, Ala-166, and Lys-167 each coordinate GTP. GDP contacts are provided by residues 135-138 and 165-167; these read NKCD and SAK. Ser-190 is modified (phosphoserine). Residues 190–219 are disordered; the sequence is SLEPSSSPGSNGKGPALGDTPPPQPSSCSC. Over residues 193 to 203 the composition is skewed to low complexity; it reads PSSSPGSNGKG. The segment covering 209–219 has biased composition (pro residues); that stretch reads TPPPQPSSCSC. 2 S-geranylgeranyl cysteine lipidation sites follow: Cys-217 and Cys-219. Cys-219 is modified (cysteine methyl ester).

Belongs to the small GTPase superfamily. Rab family. In terms of assembly, interacts with RIMS1, RIMS2, RPH3A, RPH3AL and RAB3IP. The GTP-bound form interacts with REP15. Interacts with CHM and CHML; phosphorylation at Thr-86 disrupts these interactions. Interacts with MADD (via uDENN domain); the GTP-bound form is preferred for interaction. Mg(2+) serves as cofactor. In terms of processing, phosphorylation of Thr-86 in the switch II region by LRRK2 prevents the association of RAB regulatory proteins, including CHM and CHML. In terms of tissue distribution, predominantly expressed in the adipocyte tissue, but is also expressed in several other organs including skin, spleen, heart and lung.

It is found in the cell membrane. It carries out the reaction GTP + H2O = GDP + phosphate + H(+). Regulated by guanine nucleotide exchange factors (GEFs) which promote the exchange of bound GDP for free GTP. Regulated by GTPase activating proteins (GAPs) which increase the GTP hydrolysis activity. Inhibited by GDP dissociation inhibitors (GDIs) which prevent Rab-GDP dissociation. The small GTPases Rab are key regulators of intracellular membrane trafficking, from the formation of transport vesicles to their fusion with membranes. Rabs cycle between an inactive GDP-bound form and an active GTP-bound form that is able to recruit to membranes different sets of downstream effectors directly responsible for vesicle formation, movement, tethering and fusion. RAB3D may be involved in the insulin-induced exocytosis of GLUT4-containing vesicles in adipocytes. The polypeptide is Ras-related protein Rab-3D (Mus musculus (Mouse)).